Consider the following 311-residue polypeptide: Probable deoxyhypusine synthase (311 aa).

The active-site Nucleophile is K284.

This sequence belongs to the deoxyhypusine synthase family. It depends on NAD(+) as a cofactor.

The catalysed reaction is [eIF5A protein]-L-lysine + spermidine = [eIF5A protein]-deoxyhypusine + propane-1,3-diamine. It participates in protein modification; eIF5A hypusination. Its function is as follows. Catalyzes the NAD-dependent oxidative cleavage of spermidine and the subsequent transfer of the butylamine moiety of spermidine to the epsilon-amino group of a specific lysine residue of the eIF-5A precursor protein to form the intermediate deoxyhypusine residue. The polypeptide is Probable deoxyhypusine synthase (Picrophilus torridus (strain ATCC 700027 / DSM 9790 / JCM 10055 / NBRC 100828 / KAW 2/3)).